A 642-amino-acid chain; its full sequence is 1-deoxy-D-xylulose-5-phosphate synthase (642 aa).

Residues His-79 and 120–122 (AHS) each bind thiamine diphosphate. Asp-151 is a Mg(2+) binding site. Residues 152-153 (GS), Asn-180, Tyr-290, and Glu-372 contribute to the thiamine diphosphate site. Asn-180 is a binding site for Mg(2+).

Belongs to the transketolase family. DXPS subfamily. Homodimer. Mg(2+) is required as a cofactor. The cofactor is thiamine diphosphate.

It catalyses the reaction D-glyceraldehyde 3-phosphate + pyruvate + H(+) = 1-deoxy-D-xylulose 5-phosphate + CO2. It functions in the pathway metabolic intermediate biosynthesis; 1-deoxy-D-xylulose 5-phosphate biosynthesis; 1-deoxy-D-xylulose 5-phosphate from D-glyceraldehyde 3-phosphate and pyruvate: step 1/1. Its function is as follows. Catalyzes the acyloin condensation reaction between C atoms 2 and 3 of pyruvate and glyceraldehyde 3-phosphate to yield 1-deoxy-D-xylulose-5-phosphate (DXP). The chain is 1-deoxy-D-xylulose-5-phosphate synthase from Beijerinckia indica subsp. indica (strain ATCC 9039 / DSM 1715 / NCIMB 8712).